The chain runs to 467 residues: 3-isopropylmalate dehydratase large subunit (467 aa).

C348, C408, and C411 together coordinate [4Fe-4S] cluster. The interval 417 to 445 is disordered; it reads DQLTPGERSASTSNRNFEGRQGKGGRTHL.

It belongs to the aconitase/IPM isomerase family. LeuC type 1 subfamily. Heterodimer of LeuC and LeuD. It depends on [4Fe-4S] cluster as a cofactor.

It carries out the reaction (2R,3S)-3-isopropylmalate = (2S)-2-isopropylmalate. It functions in the pathway amino-acid biosynthesis; L-leucine biosynthesis; L-leucine from 3-methyl-2-oxobutanoate: step 2/4. Catalyzes the isomerization between 2-isopropylmalate and 3-isopropylmalate, via the formation of 2-isopropylmaleate. This is 3-isopropylmalate dehydratase large subunit from Saccharopolyspora erythraea (strain ATCC 11635 / DSM 40517 / JCM 4748 / NBRC 13426 / NCIMB 8594 / NRRL 2338).